Here is a 520-residue protein sequence, read N- to C-terminus: GMP synthase [glutamine-hydrolyzing] (520 aa).

The 195-residue stretch at 8 to 202 (RLLIIDFGSQ…FVRLAGFTGD (195 aa)) folds into the Glutamine amidotransferase type-1 domain. Residue cysteine 86 is the Nucleophile of the active site. Catalysis depends on residues histidine 177 and glutamate 179. Positions 203–395 (WTMDAYREQA…LGLPASFIGR (193 aa)) constitute a GMPS ATP-PPase domain. Residue 230 to 236 (SGGVDSS) participates in ATP binding.

As to quaternary structure, homodimer.

It carries out the reaction XMP + L-glutamine + ATP + H2O = GMP + L-glutamate + AMP + diphosphate + 2 H(+). Its pathway is purine metabolism; GMP biosynthesis; GMP from XMP (L-Gln route): step 1/1. Functionally, catalyzes the synthesis of GMP from XMP. In Dinoroseobacter shibae (strain DSM 16493 / NCIMB 14021 / DFL 12), this protein is GMP synthase [glutamine-hydrolyzing].